Consider the following 756-residue polypeptide: NADP-dependent malic enzyme (756 aa).

Residues 1–428 (MTEQLRQAAL…KLTQFVYKTS (428 aa)) are malic enzyme. The active-site Proton donor is Tyr-39. Lys-94 (proton acceptor) is an active-site residue. A divalent metal cation contacts are provided by Glu-136, Asp-137, and Asp-162. NADP(+) is bound by residues 195-198 (AGAA), Asn-288, and Asn-320. The segment at 429-756 (LFMRPIFSQA…AYAAVKAQQE (328 aa)) is phosphate acetyltransferase.

This sequence in the N-terminal section; belongs to the malic enzymes family. In the C-terminal section; belongs to the phosphate acetyltransferase and butyryltransferase family. Mg(2+) serves as cofactor. Requires Mn(2+) as cofactor.

The enzyme catalyses (S)-malate + NADP(+) = pyruvate + CO2 + NADPH. It carries out the reaction oxaloacetate + H(+) = pyruvate + CO2. This is NADP-dependent malic enzyme (maeB) from Haemophilus influenzae (strain ATCC 51907 / DSM 11121 / KW20 / Rd).